The sequence spans 421 residues: tRNA (guanine-N(7)-)-methyltransferase non-catalytic subunit TRM82 (421 aa).

WD repeat units lie at residues 72–112, 170–212, and 216–258; these read AVYS…EDPE, GHVS…IVDK, and GHKE…SQYS.

This sequence belongs to the WD repeat TRM82 family. In terms of assembly, forms a heterodimer with the catalytic subunit TRM8.

It is found in the nucleus. It functions in the pathway tRNA modification; N(7)-methylguanine-tRNA biosynthesis. Its function is as follows. Required for the formation of N(7)-methylguanine at position 46 (m7G46) in tRNA. In the complex, it is required to stabilize and induce conformational changes of the catalytic subunit. The polypeptide is tRNA (guanine-N(7)-)-methyltransferase non-catalytic subunit TRM82 (Candida glabrata (strain ATCC 2001 / BCRC 20586 / JCM 3761 / NBRC 0622 / NRRL Y-65 / CBS 138) (Yeast)).